Consider the following 133-residue polypeptide: Holo-[acyl-carrier-protein] synthase (133 aa).

Mg(2+) is bound by residues Asp8 and Glu57.

It belongs to the P-Pant transferase superfamily. AcpS family. It depends on Mg(2+) as a cofactor.

Its subcellular location is the cytoplasm. The enzyme catalyses apo-[ACP] + CoA = holo-[ACP] + adenosine 3',5'-bisphosphate + H(+). Transfers the 4'-phosphopantetheine moiety from coenzyme A to a Ser of acyl-carrier-protein. The sequence is that of Holo-[acyl-carrier-protein] synthase from Bartonella quintana (strain Toulouse) (Rochalimaea quintana).